The following is a 257-amino-acid chain: 5'-nucleotidase SurE (257 aa).

Positions 8, 9, 40, and 92 each coordinate a divalent metal cation.

This sequence belongs to the SurE nucleotidase family. Requires a divalent metal cation as cofactor.

Its subcellular location is the cytoplasm. The enzyme catalyses a ribonucleoside 5'-phosphate + H2O = a ribonucleoside + phosphate. Its function is as follows. Nucleotidase that shows phosphatase activity on nucleoside 5'-monophosphates. The protein is 5'-nucleotidase SurE of Rhizobium etli (strain ATCC 51251 / DSM 11541 / JCM 21823 / NBRC 15573 / CFN 42).